Here is a 953-residue protein sequence, read N- to C-terminus: Lysosomal alpha-glucosidase (953 aa).

The N-terminal stretch at Met-1–Leu-27 is a signal peptide. A propeptide spanning residues Gly-28–Gln-69 is cleaved from the precursor. In terms of domain architecture, P-type spans Thr-80–Pro-131. 3 disulfide bridges follow: Cys-82–Cys-109, Cys-92–Cys-108, and Cys-103–Cys-127. Residues Asn-140, Asn-233, and Asn-390 are each glycosylated (N-linked (GlcNAc...) asparagine). Asp-404 serves as a coordination point for substrate. Residue Asn-470 is glycosylated (N-linked (GlcNAc...) asparagine). The active-site Nucleophile is the Asp-518. The active site involves Glu-521. Cys-533 and Cys-558 form a disulfide bridge. Substrate-binding residues include Arg-600 and Asp-616. Cys-647 and Cys-658 are oxidised to a cystine. Asn-652 carries an N-linked (GlcNAc...) asparagine glycan. A substrate-binding site is contributed by His-674. N-linked (GlcNAc...) asparagine glycans are attached at residues Asn-883 and Asn-926.

The protein belongs to the glycosyl hydrolase 31 family.

Its subcellular location is the lysosome. It is found in the lysosome membrane. It carries out the reaction Hydrolysis of terminal, non-reducing (1-&gt;4)-linked alpha-D-glucose residues with release of alpha-D-glucose.. Functionally, essential for the degradation of glycogen in lysosomes. Has highest activity on alpha-1,4-linked glycosidic linkages, but can also hydrolyze alpha-1,6-linked glucans. The protein is Lysosomal alpha-glucosidase (Gaa) of Rattus norvegicus (Rat).